Here is a 422-residue protein sequence, read N- to C-terminus: MTNKEIFEESKEYMPGGVNSPVRAYMDLNIDPPIIKSGKDSHLFDEEGKEYIDFIEAWGPMILGHKNQKVLNEVKEVLDEGVGFGAPTSLELKLAKYICTTVDNVEMIRMVNSGTEATMSAVKLARGYTKRDKIIKFAGCYHGHFDGFLVEAGSGVLTQNIPGSPGVPKGSIENTLIAEYNNVESVEVLFNKYKDEIAAVIIEPVAGNMGVIPAKKEFLVKLRELCTENQSILIFDEVMSGFRVAYKGAQSLYGVTPDLITFAKIMGGGFPCGAYGGKKEIMKQLSPLGPVYQAGTMSGNPVVMAAGYASLRQLHENPEYYTYMDKLGSKLEAGILEISKEKGIPLVVNRCVNMMTIFFNKAKEVKSYSDAKASDTKMFARFAEHMITSGIYVPPSQFEAMFLGVKHTEEDIERFLDVMKKL.

Position 264 is an N6-(pyridoxal phosphate)lysine (K264).

This sequence belongs to the class-III pyridoxal-phosphate-dependent aminotransferase family. HemL subfamily. In terms of assembly, homodimer. Requires pyridoxal 5'-phosphate as cofactor.

The protein resides in the cytoplasm. It carries out the reaction (S)-4-amino-5-oxopentanoate = 5-aminolevulinate. Its pathway is porphyrin-containing compound metabolism; protoporphyrin-IX biosynthesis; 5-aminolevulinate from L-glutamyl-tRNA(Glu): step 2/2. In Clostridium acetobutylicum (strain ATCC 824 / DSM 792 / JCM 1419 / IAM 19013 / LMG 5710 / NBRC 13948 / NRRL B-527 / VKM B-1787 / 2291 / W), this protein is Glutamate-1-semialdehyde 2,1-aminomutase.